Here is a 513-residue protein sequence, read N- to C-terminus: Serine/threonine-protein kinase pakH (513 aa).

The Protein kinase domain maps to 42–294 (FEIQEKLGEG…PSQLLDHPFI (253 aa)). Residues 48–56 (LGEGSFGSV) and lysine 71 contribute to the ATP site. Aspartate 163 functions as the Proton acceptor in the catalytic mechanism. The interval 313–358 (KSKKRKSIGPSVSPKQQPNDNNNNNNNNKPQFLSKLLNNNSNSSND) is disordered. Residues 331-357 (NDNNNNNNNNKPQFLSKLLNNNSNSSN) show a composition bias toward low complexity. A helical transmembrane segment spans residues 493–512 (IVLYSTLGLILVLSVFFKFF).

It belongs to the protein kinase superfamily. STE Ser/Thr protein kinase family. STE20 subfamily. Mg(2+) is required as a cofactor.

Its subcellular location is the membrane. It carries out the reaction L-seryl-[protein] + ATP = O-phospho-L-seryl-[protein] + ADP + H(+). The enzyme catalyses L-threonyl-[protein] + ATP = O-phospho-L-threonyl-[protein] + ADP + H(+). This Dictyostelium discoideum (Social amoeba) protein is Serine/threonine-protein kinase pakH (pakH-1).